Consider the following 581-residue polypeptide: MYRTHNCGELRKKDVEKEVILSGWVDRIRDLGGIKFIILRDRYGKTQLVVNPNSPAYEISQELGREWVIQVYGKVLERPDETKTEMVTGEIEVEVNKIKVLSKSDVPPFYPGENVSEDLRLKYRYIDLRDERMQKNLIIRHKMAQAAREFLNKHDFLEVETPYLTKSTPEGARDFLVPSRLQKGKFYALPQSPQLFKQILMVSGFDRYYQFARCFRDEDLRADRQPEFTQIDIEMSFVKMDEILDLMESFARFVFGKVGIKLPEKFDRLSYEEAMELYGSDKPDRRYGMQLQDFTNYFVNTEFKVIKNVLERSGSVKGFITTIPISRKIASQFEEFVKQYGLGGLLWFKLDDEIVSPTAKFLKESYKKIVKEYNLDKGSVVLLAAHENREILNTALGALRLKVGKEYFNELEKVFDALWIVDFPFLEWNEEESRFEARHHPFTMPKNLEQKLEDIKAYAYDMILNGMEIGGGSIRIHDSEVQKRVFEIIGLTEEEANEKFGFFISALKYGVPPHGGIAFGFDRMVSIAANVASIRDVIAFPKTSSGICQLTGAPSTVEEKQLKELSIQIFKGGIENERNES.

Glu-170 is an L-aspartate binding site. The interval 194–197 (QLFK) is aspartate. Arg-216 contributes to the L-aspartate binding site. ATP is bound by residues 216-218 (RDE) and Gln-225. His-439 is an L-aspartate binding site. Glu-468 provides a ligand contact to ATP. Arg-475 serves as a coordination point for L-aspartate. 520-523 (GFDR) is an ATP binding site.

This sequence belongs to the class-II aminoacyl-tRNA synthetase family. Type 1 subfamily. In terms of assembly, homodimer.

It localises to the cytoplasm. The catalysed reaction is tRNA(Asp) + L-aspartate + ATP = L-aspartyl-tRNA(Asp) + AMP + diphosphate. In terms of biological role, catalyzes the attachment of L-aspartate to tRNA(Asp) in a two-step reaction: L-aspartate is first activated by ATP to form Asp-AMP and then transferred to the acceptor end of tRNA(Asp). This Thermosipho melanesiensis (strain DSM 12029 / CIP 104789 / BI429) protein is Aspartate--tRNA ligase.